The following is a 597-amino-acid chain: Cell division cycle protein 23 homolog (597 aa).

The residue at position 2 (alanine 2) is an N-acetylalanine. TPR repeat units follow at residues 27–63 (SDLR…FSLP), 73–112 (PPPI…CNSK), and 114–144 (AYFL…LEKG). Lysine 147 is covalently cross-linked (Glycyl lysine isopeptide (Lys-Gly) (interchain with G-Cter in SUMO2)). TPR repeat units lie at residues 169–200 (GFGL…HVLP), 229–259 (MKEF…DVGF), 263–293 (SYIV…RKQD), 297–327 (IENM…CEID), 331–361 (VETC…LKLN), 366–395 (GAWT…IEVN), 400–432 (RAWY…RPND), and 433–466 (SRML…GDVE). Tyrosine 273 is subject to Phosphotyrosine. Lysine 467 is subject to N6-acetyllysine. TPR repeat units lie at residues 468 to 500 (MALV…IYSC) and 504 to 540 (VEHL…CAFN). 2 positions are modified to phosphothreonine: threonine 562 and threonine 565. Residue serine 578 is modified to Phosphoserine. Threonine 582 carries the post-translational modification Phosphothreonine. Phosphoserine is present on residues serine 588 and serine 593. Threonine 596 bears the Phosphothreonine mark.

Belongs to the APC8/CDC23 family. The mammalian APC/C is composed at least of 14 distinct subunits ANAPC1, ANAPC2, CDC27/APC3, ANAPC4, ANAPC5, CDC16/APC6, ANAPC7, CDC23/APC8, ANAPC10, ANAPC11, CDC26/APC12, ANAPC13, ANAPC15 and ANAPC16 that assemble into a complex of at least 19 chains with a combined molecular mass of around 1.2 MDa; APC/C interacts with FZR1 and FBXO5. Interacts with FBXO43; the interaction is direct. Phosphorylated. Phosphorylation on Thr-562 occurs specifically during mitosis.

It participates in protein modification; protein ubiquitination. In terms of biological role, component of the anaphase promoting complex/cyclosome (APC/C), a cell cycle-regulated E3 ubiquitin ligase that controls progression through mitosis and the G1 phase of the cell cycle. The APC/C complex acts by mediating ubiquitination and subsequent degradation of target proteins: it mainly mediates the formation of 'Lys-11'-linked polyubiquitin chains and, to a lower extent, the formation of 'Lys-48'- and 'Lys-63'-linked polyubiquitin chains. The APC/C complex catalyzes assembly of branched 'Lys-11'-/'Lys-48'-linked branched ubiquitin chains on target proteins. The polypeptide is Cell division cycle protein 23 homolog (CDC23) (Homo sapiens (Human)).